Reading from the N-terminus, the 316-residue chain is 4-hydroxy-3-methylbut-2-enyl diphosphate reductase (316 aa).

C18 provides a ligand contact to [4Fe-4S] cluster. (2E)-4-hydroxy-3-methylbut-2-enyl diphosphate contacts are provided by H47 and H80. Positions 47 and 80 each coordinate dimethylallyl diphosphate. 2 residues coordinate isopentenyl diphosphate: H47 and H80. [4Fe-4S] cluster is bound at residue C102. A (2E)-4-hydroxy-3-methylbut-2-enyl diphosphate-binding site is contributed by H130. H130 is a binding site for dimethylallyl diphosphate. H130 provides a ligand contact to isopentenyl diphosphate. The active-site Proton donor is E132. Position 171 (T171) interacts with (2E)-4-hydroxy-3-methylbut-2-enyl diphosphate. [4Fe-4S] cluster is bound at residue C201. Positions 229, 230, 231, and 274 each coordinate (2E)-4-hydroxy-3-methylbut-2-enyl diphosphate. Residues S229, S230, N231, and S274 each coordinate dimethylallyl diphosphate. Residues S229, S230, N231, and S274 each coordinate isopentenyl diphosphate.

Belongs to the IspH family. [4Fe-4S] cluster serves as cofactor.

The catalysed reaction is isopentenyl diphosphate + 2 oxidized [2Fe-2S]-[ferredoxin] + H2O = (2E)-4-hydroxy-3-methylbut-2-enyl diphosphate + 2 reduced [2Fe-2S]-[ferredoxin] + 2 H(+). It catalyses the reaction dimethylallyl diphosphate + 2 oxidized [2Fe-2S]-[ferredoxin] + H2O = (2E)-4-hydroxy-3-methylbut-2-enyl diphosphate + 2 reduced [2Fe-2S]-[ferredoxin] + 2 H(+). Its pathway is isoprenoid biosynthesis; dimethylallyl diphosphate biosynthesis; dimethylallyl diphosphate from (2E)-4-hydroxy-3-methylbutenyl diphosphate: step 1/1. The protein operates within isoprenoid biosynthesis; isopentenyl diphosphate biosynthesis via DXP pathway; isopentenyl diphosphate from 1-deoxy-D-xylulose 5-phosphate: step 6/6. Its function is as follows. Catalyzes the conversion of 1-hydroxy-2-methyl-2-(E)-butenyl 4-diphosphate (HMBPP) into a mixture of isopentenyl diphosphate (IPP) and dimethylallyl diphosphate (DMAPP). Acts in the terminal step of the DOXP/MEP pathway for isoprenoid precursor biosynthesis. In Ruegeria sp. (strain TM1040) (Silicibacter sp.), this protein is 4-hydroxy-3-methylbut-2-enyl diphosphate reductase.